Here is a 585-residue protein sequence, read N- to C-terminus: Nitrogen permease regulator 3-like protein (585 aa).

Residues 117 to 157 (GEWAKRRKPRTTVESNASSSHLVSKPESSHPSTGSFEVKSS) form a disordered region. Polar residues predominate over residues 128–138 (TVESNASSSHL). The segment covering 148–157 (STGSFEVKSS) has biased composition (low complexity).

The protein belongs to the NPR3 family.

In Schizosaccharomyces pombe (strain 972 / ATCC 24843) (Fission yeast), this protein is Nitrogen permease regulator 3-like protein.